A 531-amino-acid polypeptide reads, in one-letter code: MGTDSTELSEFEKQRLANIAERDALLKKLTLDAQSSGIFPPKLARSSPVSQTKPKKKPAPKKIKKEGEAPVARRMSSRLRGIAAESEVAKRKAEEHYEAVQQAERAKRVRKSDAFSFSEMLVSGQKLSADGLIGVDVVTKGVAMPYQRTFGDEDIEKTADKELKRLREEVSGLQLWEAWEPNRIKVTPERIYTMTFHPSEAKPLIFAGDKMGNLGVLDASQERPVSSIKHEDGDEEEQEDDDDPDPVLTTLKPHTRTISSMHIHPSKPTHLYTASYDSSIRELDLEKTTSVETYAPDSPSDDVPISGIDMAADDPNTLYWTTLDGAFGRYDTRASRRTAVATWQLSEKKIGGFSLYPTHPHFFATASLDRTMRLWDLRKLSHDDPLPVGEHLSRLSVSHAAFNSAGQVATSSYDDSLKIYDFGAKGIASWEQGHTLSDAEMKPDTVVRHNCQTGRWVTILRPQWQANPQSHIQRFCIGNMNRFVDVYSSSGDQLAQLGGDGITAVPAVAVFHRSKNWIAGGTASGKICLWM.

Disordered regions lie at residues 37–83 (GIFP…RGIA) and 218–264 (DASQ…MHIH). Residues 53 to 64 (KPKKKPAPKKIK) are compositionally biased toward basic residues. The WD 1 repeat unit spans residues 186–227 (VTPERIYTMTFHPSEAKPLIFAGDKMGNLGVLDASQERPVSS). Acidic residues predominate over residues 233 to 245 (GDEEEQEDDDDPD). WD repeat units lie at residues 253 to 293 (PHTR…SVET), 300 to 340 (SDDV…RTAV), 345 to 385 (LSEK…HDDP), 392 to 431 (LSRL…ASWE), 454 to 497 (GRWV…LAQL), and 500 to 531 (DGIT…CLWM).

Belongs to the WD repeat DDB2/WDR76 family.

DNA-binding protein that binds to both single- and double-stranded DNA. Binds preferentially to UV-damaged DNA. May be involved in DNA-metabolic processes. The sequence is that of DNA damage-binding protein cmr1 from Aspergillus clavatus (strain ATCC 1007 / CBS 513.65 / DSM 816 / NCTC 3887 / NRRL 1 / QM 1276 / 107).